Consider the following 164-residue polypeptide: DNA-binding protein inhibitor ID-1 (164 aa).

Positions 46–98 constitute a bHLH domain; that stretch reads LPALLDEQQVNVLLYDMNGCYSRLKELVPTLPQNRKVSKVEILQHVIDYIRDL. Positions 91 to 104 match the Nuclear export signal motif; the sequence is VIDYIRDLQLELNS.

As to quaternary structure, heterodimer with other HLH proteins. Interacts with COPS5, IFI204, GATA4, NKX2-5, CLOCK and BMAL1. Isoform Short can form homodimers. In terms of processing, phosphorylated in vitro by PKA and PKC.

The protein resides in the cytoplasm. The protein localises to the nucleus. Its function is as follows. Transcriptional regulator (lacking a basic DNA binding domain) which negatively regulates the basic helix-loop-helix (bHLH) transcription factors by forming heterodimers and inhibiting their DNA binding and transcriptional activity. Implicated in regulating a variety of cellular processes, including cellular growth, senescence, differentiation, apoptosis, angiogenesis, and neoplastic transformation. Inhibits skeletal muscle and cardiac myocyte differentiation. Regulates the circadian clock by repressing the transcriptional activator activity of the CLOCK-BMAL1 heterodimer. This chain is DNA-binding protein inhibitor ID-1 (Id1), found in Rattus norvegicus (Rat).